Consider the following 72-residue polypeptide: Probable protein E5B (72 aa).

In Homo sapiens (Human), this protein is Probable protein E5B.